The sequence spans 387 residues: Methyltransferase phomM (387 aa).

Residues 98-223 (PHRPKDLHIL…QSVADLFTTL (126 aa)) are methyltransferase domain.

This sequence belongs to the class I-like SAM-binding methyltransferase superfamily. Erg6/SMT family.

Its pathway is mycotoxin biosynthesis. Methyltransferase; part of the gene cluster that mediates the biosynthesis of the phomopsins, a group of hexapeptide mycotoxins which infects lupins and causes lupinosis disease in livestock. Within the pathway, phomM acts as an S-adenosylmethionine-dependent alpha-N-methyltransferase that catalyzes two successive N-methylation reactions, converting N-desmethyl-phomopsin A to phomopsin A and phomopsin A further to an N,N-dimethylated congener called phomopsin E. The pathway starts with the processing of the precursor phomA by several endopeptidases including kexin proteases as well as the cluster-specific S41 family peptidase phomP1 and the oligopeptidase phomG to produce 10 identical copies of the hexapeptide Tyr-Val-Ile-Pro-Ile-Asp. After being excised from the precursor peptide, the core peptides are cyclized and modified post-translationally by enzymes encoded within the gene cluster. The timing and order of proteolysis of the phomA precursor and PTMs are still unknown. Two tyrosinase-like enzymes, phomQ1 and phomQ2, catalyze the chlorination and hydroxylation of Tyr, respectively. PhomYb, is proposed to be involved in the construction of the macrocyclic structure. The other 4 ustYa family proteins may be involved in PTMs that generate the unique structure of phomopsin A. PhomYa is required for the hydroxylation of C-beta of Tyr. PhomYc, phomYd, and phomYe are responsible for the biosynthesis of 2,3-dehydroisoleucine (dIle), 2,3-dehydroaspartic acid (dAsp), and 3,4-dehydroproline (dPro), respectively. While dIle formation by phomYc is indispensable for the installation of dAsp by phomYd, the order of the other PTMs have not been elucidated yet. Most of the biosynthetic enzymes likely have broad substrate specificity, and thus, there might be a metabolic grid from a precursor to phomopsin A. The enzyme(s) responsible for the biosynthesis of 3,4-dehydrovaline (dVal) have also not been identified yet. Finally, phomM acts as an S-adenosylmethionine-dependent alpha-N-methyltransferase that catalyzes two successive N-methylation reactions, converting N-desmethyl-phomopsin A to phomopsin A and phomopsin A further to an N,N-dimethylated congener called phomopsin E. In Diaporthe leptostromiformis (Lupinosis disease fungus), this protein is Methyltransferase phomM.